A 318-amino-acid polypeptide reads, in one-letter code: Acetyl-coenzyme A carboxylase carboxyl transferase subunit alpha (318 aa).

The CoA carboxyltransferase C-terminal domain maps to 31–292; that stretch reads DLTNEIEKLE…NKTITKSLHA (262 aa).

This sequence belongs to the AccA family. Acetyl-CoA carboxylase is a heterohexamer composed of biotin carboxyl carrier protein (AccB), biotin carboxylase (AccC) and two subunits each of ACCase subunit alpha (AccA) and ACCase subunit beta (AccD).

It localises to the cytoplasm. It carries out the reaction N(6)-carboxybiotinyl-L-lysyl-[protein] + acetyl-CoA = N(6)-biotinyl-L-lysyl-[protein] + malonyl-CoA. The protein operates within lipid metabolism; malonyl-CoA biosynthesis; malonyl-CoA from acetyl-CoA: step 1/1. Functionally, component of the acetyl coenzyme A carboxylase (ACC) complex. First, biotin carboxylase catalyzes the carboxylation of biotin on its carrier protein (BCCP) and then the CO(2) group is transferred by the carboxyltransferase to acetyl-CoA to form malonyl-CoA. The sequence is that of Acetyl-coenzyme A carboxylase carboxyl transferase subunit alpha from Listeria monocytogenes serotype 4a (strain HCC23).